The chain runs to 156 residues: Small ribosomal subunit protein uS7 (156 aa).

Belongs to the universal ribosomal protein uS7 family. Part of the 30S ribosomal subunit. Contacts proteins S9 and S11.

Functionally, one of the primary rRNA binding proteins, it binds directly to 16S rRNA where it nucleates assembly of the head domain of the 30S subunit. Is located at the subunit interface close to the decoding center, probably blocks exit of the E-site tRNA. The protein is Small ribosomal subunit protein uS7 of Shouchella clausii (strain KSM-K16) (Alkalihalobacillus clausii).